The primary structure comprises 24 residues: Attacin (24 aa).

Belongs to the attacin/sarcotoxin-2 family.

The protein resides in the secreted. Hemolymph antibacterial protein. This Heliothis virescens (Tobacco budworm moth) protein is Attacin.